The sequence spans 147 residues: Hemoglobin subunit delta (147 aa).

Position 2 is an N-acetylalanine; in variant Niigata (V2). In terms of domain architecture, Globin spans 3–147; the sequence is HLTPEEKTAV…VANALAHKYH (145 aa). The residue at position 51 (S51) is a Phosphoserine. Residues H64 and H93 each coordinate heme b.

This sequence belongs to the globin family. As to quaternary structure, heterotetramer of two alpha chains and two delta chains in adult hemoglobin A2 (HbA2). HbA2 represents less than 3.5% of adult hemoglobin. As to expression, red blood cells.

Its function is as follows. Involved in oxygen transport from the lung to the various peripheral tissues. This chain is Hemoglobin subunit delta (HBD), found in Homo sapiens (Human).